Reading from the N-terminus, the 307-residue chain is Holliday junction branch migration complex subunit RuvB (307 aa).

The large ATPase domain (RuvB-L) stretch occupies residues 1–167 (MKLQIKPPNT…FGVILNINYY (167 aa)). ATP is bound by residues Ile-5, Gly-48, Lys-51, Thr-52, Thr-53, Arg-157, Tyr-167, and Arg-204. Residue Thr-52 coordinates Mg(2+). The interval 168 to 233 (SNAEIEKMVS…DLEGLFKNLM (66 aa)) is small ATPAse domain (RuvB-S). The interval 236–307 (KNGLQSIDVQ…NSGREYLVNF (72 aa)) is head domain (RuvB-H). Residues Arg-270, Lys-289, and Arg-294 each coordinate DNA.

This sequence belongs to the RuvB family. In terms of assembly, homohexamer. Forms an RuvA(8)-RuvB(12)-Holliday junction (HJ) complex. HJ DNA is sandwiched between 2 RuvA tetramers; dsDNA enters through RuvA and exits via RuvB. An RuvB hexamer assembles on each DNA strand where it exits the tetramer. Each RuvB hexamer is contacted by two RuvA subunits (via domain III) on 2 adjacent RuvB subunits; this complex drives branch migration. In the full resolvosome a probable DNA-RuvA(4)-RuvB(12)-RuvC(2) complex forms which resolves the HJ.

The protein resides in the cytoplasm. The catalysed reaction is ATP + H2O = ADP + phosphate + H(+). The RuvA-RuvB-RuvC complex processes Holliday junction (HJ) DNA during genetic recombination and DNA repair, while the RuvA-RuvB complex plays an important role in the rescue of blocked DNA replication forks via replication fork reversal (RFR). RuvA specifically binds to HJ cruciform DNA, conferring on it an open structure. The RuvB hexamer acts as an ATP-dependent pump, pulling dsDNA into and through the RuvAB complex. RuvB forms 2 homohexamers on either side of HJ DNA bound by 1 or 2 RuvA tetramers; 4 subunits per hexamer contact DNA at a time. Coordinated motions by a converter formed by DNA-disengaged RuvB subunits stimulates ATP hydrolysis and nucleotide exchange. Immobilization of the converter enables RuvB to convert the ATP-contained energy into a lever motion, pulling 2 nucleotides of DNA out of the RuvA tetramer per ATP hydrolyzed, thus driving DNA branch migration. The RuvB motors rotate together with the DNA substrate, which together with the progressing nucleotide cycle form the mechanistic basis for DNA recombination by continuous HJ branch migration. Branch migration allows RuvC to scan DNA until it finds its consensus sequence, where it cleaves and resolves cruciform DNA. The polypeptide is Holliday junction branch migration complex subunit RuvB (Mycoplasma genitalium (strain ATCC 33530 / DSM 19775 / NCTC 10195 / G37) (Mycoplasmoides genitalium)).